Here is a 650-residue protein sequence, read N- to C-terminus: Gamma-tubulin complex component 4 homolog (650 aa).

The residue at position 214 (Ser-214) is a Phosphoserine. Position 216 is a phosphothreonine (Thr-216). A Phosphoserine modification is found at Ser-218.

This sequence belongs to the TUBGCP family.

The protein resides in the cytoplasm. Its subcellular location is the cytoskeleton. It localises to the microtubule organizing center. The protein localises to the centrosome. Functionally, gamma-tubulin complex is necessary for microtubule nucleation at the centrosome. The sequence is that of Gamma-tubulin complex component 4 homolog (Grip75) from Drosophila melanogaster (Fruit fly).